The sequence spans 242 residues: 2-C-methyl-D-erythritol 4-phosphate cytidylyltransferase (242 aa).

The protein belongs to the IspD/TarI cytidylyltransferase family. IspD subfamily.

The catalysed reaction is 2-C-methyl-D-erythritol 4-phosphate + CTP + H(+) = 4-CDP-2-C-methyl-D-erythritol + diphosphate. Its pathway is isoprenoid biosynthesis; isopentenyl diphosphate biosynthesis via DXP pathway; isopentenyl diphosphate from 1-deoxy-D-xylulose 5-phosphate: step 2/6. Its function is as follows. Catalyzes the formation of 4-diphosphocytidyl-2-C-methyl-D-erythritol from CTP and 2-C-methyl-D-erythritol 4-phosphate (MEP). This chain is 2-C-methyl-D-erythritol 4-phosphate cytidylyltransferase, found in Halorhodospira halophila (strain DSM 244 / SL1) (Ectothiorhodospira halophila (strain DSM 244 / SL1)).